The sequence spans 277 residues: Large ribosomal subunit protein uL2c (277 aa).

Residues 224–257 (VMNPIDHPHGGGEGRAPIGRKKPLTPWGHPALGR) form a disordered region.

This sequence belongs to the universal ribosomal protein uL2 family. Part of the 50S ribosomal subunit.

Its subcellular location is the plastid. It is found in the chloroplast. This Anthoceros angustus (Hornwort) protein is Large ribosomal subunit protein uL2c (rpl2).